A 214-amino-acid chain; its full sequence is Non-structural protein NP-1 (214 aa).

Disordered stretches follow at residues Met-1–Tyr-87 and Glu-192–Asn-214. Basic residues predominate over residues Ser-33–Gly-43. Positions Glu-44–Gln-55 are enriched in basic and acidic residues. Positions Glu-56–Ala-71 are enriched in polar residues. Over residues Glu-192–Met-201 the composition is skewed to acidic residues.

It belongs to the Bocaparvovirus Non-structural protein NP-1 family.

The protein resides in the host nucleus. Its function is as follows. Required for the expression of the capsid proteins. Performs the splicing and internal polyadenylation of the viral capsid-encoding mRNA precursor, which allows its maturation and expression. Transactivates the viral promoter. The protein is Non-structural protein NP-1 (NP1) of Human bocavirus 2 (HBoV2).